We begin with the raw amino-acid sequence, 75 residues long: Bacteriocin lactacin-F subunit LafA (75 aa).

A propeptide spanning residues Met1–Gly18 is cleaved from the precursor.

This sequence belongs to the bacteriocin class IIB family. As to quaternary structure, this bacteriocin depends upon the complementation of two peptides for activity: LafA and LafX. Associated with a 180 kDa bacteriocin complex.

Its function is as follows. Heat stable bacteriocin active against Enterococcus faecalis and other Lactobacilli. This is Bacteriocin lactacin-F subunit LafA (lafA) from Lactobacillus johnsonii (strain CNCM I-12250 / La1 / NCC 533).